The chain runs to 347 residues: Gamma-glutamyl hydrolase B (347 aa).

A signal peptide spans 1–22; that stretch reads MIKLFSLFIYLYLISNLKLINT. The 292-residue stretch at 23–314 folds into the Gamma-glutamyl hydrolase domain; it reads INNTPVIGIL…THVEQIYIFN (292 aa). Catalysis depends on cysteine 128, which acts as the Nucleophile. N-linked (GlcNAc...) asparagine glycosylation is found at asparagine 152, asparagine 158, and asparagine 201. The active-site Proton donor is histidine 240. Asparagine 273, asparagine 314, and asparagine 318 each carry an N-linked (GlcNAc...) asparagine glycan.

Belongs to the peptidase C26 family.

It localises to the secreted. It is found in the extracellular space. It catalyses the reaction (6S)-5,6,7,8-tetrahydrofolyl-(gamma-L-Glu)(n) + (n-1) H2O = (6S)-5,6,7,8-tetrahydrofolate + (n-1) L-glutamate. This chain is Gamma-glutamyl hydrolase B (gghB), found in Dictyostelium discoideum (Social amoeba).